A 103-amino-acid chain; its full sequence is Large ribosomal subunit protein bL21 (103 aa).

This sequence belongs to the bacterial ribosomal protein bL21 family. As to quaternary structure, part of the 50S ribosomal subunit. Contacts protein L20.

Its function is as follows. This protein binds to 23S rRNA in the presence of protein L20. In Shewanella putrefaciens (strain CN-32 / ATCC BAA-453), this protein is Large ribosomal subunit protein bL21.